A 341-amino-acid polypeptide reads, in one-letter code: Glyceraldehyde-3-phosphate dehydrogenase 3 (341 aa).

NAD(+)-binding positions include 13-14 (RI), aspartate 35, and arginine 85. Residues 157-159 (SCT), threonine 188, 217-218 (TG), and arginine 240 each bind D-glyceraldehyde 3-phosphate. Residue cysteine 158 is the Nucleophile of the active site. Asparagine 322 is a binding site for NAD(+).

It belongs to the glyceraldehyde-3-phosphate dehydrogenase family. As to quaternary structure, homotetramer.

The protein localises to the cytoplasm. The enzyme catalyses D-glyceraldehyde 3-phosphate + phosphate + NAD(+) = (2R)-3-phospho-glyceroyl phosphate + NADH + H(+). Its pathway is carbohydrate degradation; glycolysis; pyruvate from D-glyceraldehyde 3-phosphate: step 1/5. The sequence is that of Glyceraldehyde-3-phosphate dehydrogenase 3 (gpd-3) from Caenorhabditis elegans.